Reading from the N-terminus, the 290-residue chain is Ribosomal RNA small subunit methyltransferase A (290 aa).

S-adenosyl-L-methionine is bound by residues N27, L29, G54, E75, D100, and N125.

It belongs to the class I-like SAM-binding methyltransferase superfamily. rRNA adenine N(6)-methyltransferase family. RsmA subfamily.

Its subcellular location is the cytoplasm. It catalyses the reaction adenosine(1518)/adenosine(1519) in 16S rRNA + 4 S-adenosyl-L-methionine = N(6)-dimethyladenosine(1518)/N(6)-dimethyladenosine(1519) in 16S rRNA + 4 S-adenosyl-L-homocysteine + 4 H(+). Its function is as follows. Specifically dimethylates two adjacent adenosines (A1518 and A1519) in the loop of a conserved hairpin near the 3'-end of 16S rRNA in the 30S particle. May play a critical role in biogenesis of 30S subunits. This is Ribosomal RNA small subunit methyltransferase A from Streptococcus pyogenes serotype M3 (strain ATCC BAA-595 / MGAS315).